The chain runs to 510 residues: ATP synthase subunit alpha (510 aa).

An ATP-binding site is contributed by 171 to 178 (GDRQTGKT).

It belongs to the ATPase alpha/beta chains family. F-type ATPases have 2 components, CF(1) - the catalytic core - and CF(0) - the membrane proton channel. CF(1) has five subunits: alpha(3), beta(3), gamma(1), delta(1), epsilon(1). CF(0) has three main subunits: a(1), b(2) and c(9-12). The alpha and beta chains form an alternating ring which encloses part of the gamma chain. CF(1) is attached to CF(0) by a central stalk formed by the gamma and epsilon chains, while a peripheral stalk is formed by the delta and b chains.

The protein resides in the cell inner membrane. The enzyme catalyses ATP + H2O + 4 H(+)(in) = ADP + phosphate + 5 H(+)(out). Its function is as follows. Produces ATP from ADP in the presence of a proton gradient across the membrane. The alpha chain is a regulatory subunit. The chain is ATP synthase subunit alpha from Phenylobacterium zucineum (strain HLK1).